The sequence spans 92 residues: Muscle LIM protein 1 (92 aa).

The 52-residue stretch at 11–62 (CPACGKSVYAAEERVAGGYKFHKTCFKCSMCNKALDSTNCTEHEKELFCKNC) folds into the LIM zinc-binding domain. The Nuclear localization signal signature appears at 65 to 70 (RKYGPK).

In the embryo, expression is restricted to the somatic, visceral, and pharyngeal muscles. Within the somatic musculature, MLP60 is distributed throughout the muscle fibers. There is no expression in cardiac mesoderm or in fat body.

Its subcellular location is the cytoplasm. The protein localises to the nucleus. In terms of biological role, positive regulator of myogenesis. This is Muscle LIM protein 1 (Mlp60A) from Drosophila melanogaster (Fruit fly).